The following is a 495-amino-acid chain: L-arabinose isomerase (495 aa).

Residues glutamate 305, glutamate 332, histidine 349, and histidine 448 each contribute to the Mn(2+) site.

This sequence belongs to the arabinose isomerase family. The cofactor is Mn(2+).

The enzyme catalyses beta-L-arabinopyranose = L-ribulose. It participates in carbohydrate degradation; L-arabinose degradation via L-ribulose; D-xylulose 5-phosphate from L-arabinose (bacterial route): step 1/3. Catalyzes the conversion of L-arabinose to L-ribulose. The polypeptide is L-arabinose isomerase (Mannheimia succiniciproducens (strain KCTC 0769BP / MBEL55E)).